A 181-amino-acid chain; its full sequence is FMN reductase (NADH) RutF (181 aa).

The protein belongs to the non-flavoprotein flavin reductase family. RutF subfamily.

It carries out the reaction FMNH2 + NAD(+) = FMN + NADH + 2 H(+). In terms of biological role, catalyzes the reduction of FMN to FMNH2 which is used to reduce pyrimidine by RutA via the Rut pathway. The chain is FMN reductase (NADH) RutF from Ancylobacter novellus (strain ATCC 8093 / DSM 506 / JCM 20403 / CCM 1077 / IAM 12100 / NBRC 12443 / NCIMB 10456) (Starkeya novella).